A 346-amino-acid chain; its full sequence is uncharacterized protein (346 aa).

This sequence belongs to the IIV-6 359L family.

This is an uncharacterized protein from Invertebrate iridescent virus 6 (IIV-6).